The sequence spans 380 residues: Cytochrome b (380 aa).

The next 4 helical transmembrane spans lie at 33-53, 77-98, 113-133, and 178-198; these read FGSL…FLAM, WLIR…FIHV, WNIG…GYVL, and FFAF…VHLL. Heme b-binding residues include histidine 83 and histidine 97. Residues histidine 182 and histidine 196 each contribute to the heme b site. Histidine 201 is an a ubiquinone binding site. The next 4 membrane-spanning stretches (helical) occupy residues 226–246, 288–308, 320–340, and 347–367; these read IKDI…VLFF, LGGV…PLIN, ITQA…WIGG, and FTMI…MFMF.

It belongs to the cytochrome b family. The cytochrome bc1 complex contains 11 subunits: 3 respiratory subunits (MT-CYB, CYC1 and UQCRFS1), 2 core proteins (UQCRC1 and UQCRC2) and 6 low-molecular weight proteins (UQCRH/QCR6, UQCRB/QCR7, UQCRQ/QCR8, UQCR10/QCR9, UQCR11/QCR10 and a cleavage product of UQCRFS1). This cytochrome bc1 complex then forms a dimer. It depends on heme b as a cofactor.

It is found in the mitochondrion inner membrane. In terms of biological role, component of the ubiquinol-cytochrome c reductase complex (complex III or cytochrome b-c1 complex) that is part of the mitochondrial respiratory chain. The b-c1 complex mediates electron transfer from ubiquinol to cytochrome c. Contributes to the generation of a proton gradient across the mitochondrial membrane that is then used for ATP synthesis. The sequence is that of Cytochrome b (MT-CYB) from Calomys musculinus (Drylands vesper mouse).